A 555-amino-acid polypeptide reads, in one-letter code: MIWVAVVITMLLFILVAKPTGIYLEKAFQGSKKLDKVFGPFEKLIFKITGVKEYNQTWKQYALSLVLLNGFMIVVVYFIFRLQGVLPLNPAHIEGMEPTLAFNTAISFMADTNLQHYSGENGLSYLSQLIGITFLMFAAPATTLALVMAFIRGLAGKELGNFFVDFTRALTRVFLPIAFMAALVFVALGVPQTLDGAVTAQTIDGAKQSILRGPVASFVSIKELGNNGGGFFGANSTHPFENPGQMSNILQMMLMMLLPTALPFTYGRMVGNKKQGRILFVSLFMVFLLGFITITTSELNGNPALNGMGIEHVQGSTEGKEVRFGTVFSSLYATVTTAAETGAVNTMHDTLTPIGGLVPLVNMMLNTVYGGVGAGFVNIIMYAIIAVFISGLMVGRTPEFLGKKIEGKEMKLIAVTILFHPLLILGFSALALSTSLGTDAISHSGFHGLTQVVYEYTSSAANNGSGFEGLADNTPFWNITTGLVMFLGRYFSLITMLAVAASLKEKTVVPETVGTFRTDNSLFGGIFIGTIVIVGALTFFPMLVLGPIAEFLTLK.

The next 10 membrane-spanning stretches (helical) occupy residues 2-22, 60-80, 130-150, 173-193, 246-266, 278-298, 374-394, 412-432, 483-503, and 525-545; these read IWVA…PTGI, QYAL…YFIF, IGIT…VMAF, VFLP…VPQT, MSNI…PFTY, ILFV…TTSE, AGFV…GLMV, LIAV…ALAL, LVMF…AASL, and GIFI…MLVL.

This sequence belongs to the KdpA family. In terms of assembly, the system is composed of three essential subunits: KdpA, KdpB and KdpC.

It is found in the cell membrane. In terms of biological role, part of the high-affinity ATP-driven potassium transport (or Kdp) system, which catalyzes the hydrolysis of ATP coupled with the electrogenic transport of potassium into the cytoplasm. This subunit binds the extracellular potassium ions and delivers the ions to the membrane domain of KdpB through an intramembrane tunnel. This is Potassium-transporting ATPase potassium-binding subunit from Bacillus cereus (strain Q1).